Here is a 289-residue protein sequence, read N- to C-terminus: Probable phosphoribulokinase (289 aa).

Residue 12–20 (GSSGAGTTT) coordinates ATP.

The protein belongs to the phosphoribulokinase family.

It carries out the reaction D-ribulose 5-phosphate + ATP = D-ribulose 1,5-bisphosphate + ADP + H(+). This is Probable phosphoribulokinase (prkB) from Escherichia coli (strain K12).